The sequence spans 315 residues: UDP-N-acetylenolpyruvoylglucosamine reductase (315 aa).

In terms of domain architecture, FAD-binding PCMH-type spans 27–207; the sequence is RVGGPADVLY…TKRMNAITAR (181 aa). The active site involves R172. A disordered region spans residues 214-236; that stretch reads IREKTSGSTFANPDPPGTPNQRK. S221 acts as the Proton donor in catalysis. E297 is a catalytic residue.

This sequence belongs to the MurB family. FAD serves as cofactor.

The protein localises to the cytoplasm. It carries out the reaction UDP-N-acetyl-alpha-D-muramate + NADP(+) = UDP-N-acetyl-3-O-(1-carboxyvinyl)-alpha-D-glucosamine + NADPH + H(+). Its pathway is cell wall biogenesis; peptidoglycan biosynthesis. Functionally, cell wall formation. The protein is UDP-N-acetylenolpyruvoylglucosamine reductase of Maricaulis maris (strain MCS10) (Caulobacter maris).